A 379-amino-acid polypeptide reads, in one-letter code: Queuine tRNA-ribosyltransferase (379 aa).

Residue D96 is the Proton acceptor of the active site. Residues D96–F100, D150, Q196, and G223 each bind substrate. Positions G254 to Y260 are RNA binding. Residue D273 is the Nucleophile of the active site. The Zn(2+) site is built by C311, C313, C316, and H342.

The protein belongs to the queuine tRNA-ribosyltransferase family. As to quaternary structure, homodimer. Within each dimer, one monomer is responsible for RNA recognition and catalysis, while the other monomer binds to the replacement base PreQ1. Zn(2+) is required as a cofactor.

The enzyme catalyses 7-aminomethyl-7-carbaguanine + guanosine(34) in tRNA = 7-aminomethyl-7-carbaguanosine(34) in tRNA + guanine. Its pathway is tRNA modification; tRNA-queuosine biosynthesis. Functionally, catalyzes the base-exchange of a guanine (G) residue with the queuine precursor 7-aminomethyl-7-deazaguanine (PreQ1) at position 34 (anticodon wobble position) in tRNAs with GU(N) anticodons (tRNA-Asp, -Asn, -His and -Tyr). Catalysis occurs through a double-displacement mechanism. The nucleophile active site attacks the C1' of nucleotide 34 to detach the guanine base from the RNA, forming a covalent enzyme-RNA intermediate. The proton acceptor active site deprotonates the incoming PreQ1, allowing a nucleophilic attack on the C1' of the ribose to form the product. After dissociation, two additional enzymatic reactions on the tRNA convert PreQ1 to queuine (Q), resulting in the hypermodified nucleoside queuosine (7-(((4,5-cis-dihydroxy-2-cyclopenten-1-yl)amino)methyl)-7-deazaguanosine). The sequence is that of Queuine tRNA-ribosyltransferase from Treponema denticola (strain ATCC 35405 / DSM 14222 / CIP 103919 / JCM 8153 / KCTC 15104).